Here is a 451-residue protein sequence, read N- to C-terminus: MGRRYFGTDGIRGTVGEAPITPDFVLRLGYAAGKVLAGTADVAAGARPTVLIGKDTRVSGYMLEAALEAGFSAAGVDVMLAGPMPTPGVAYLTRALRLSAGVVISASHNPYQDNGIKFFSADGNKLPDETEAAIEAWLDKPLECASSDRLGKARRLEDAAGRYIEFCKSTFPAAYDLRGLKLVIDCAHGAAYQIAPHVFHELGADVIPIGVAPNGFNINDGVGATAPDALVRAVRANHADLGIALDGDADRLQVVDSTGRLYNGDELLYVLVKDRIATAGKVDGAVGTLMTNLAVEVALQREGVPFVRAAVGDRYVLEQLRERGWQLGAEGSGHILSLDRHSTGDGIVSALLVLAALKRSDRTLAQMLDGVTLFPQKLINVRMKPGADWKGSASIRAAIDAAEGALAGSGRVLIRASGTEPVLRVMVEAQQAADATRHAEAIADAVRIATS.

Catalysis depends on S107, which acts as the Phosphoserine intermediate. Mg(2+)-binding residues include S107, D246, D248, and D250. S107 bears the Phosphoserine mark.

This sequence belongs to the phosphohexose mutase family. Mg(2+) serves as cofactor. Post-translationally, activated by phosphorylation.

The enzyme catalyses alpha-D-glucosamine 1-phosphate = D-glucosamine 6-phosphate. Functionally, catalyzes the conversion of glucosamine-6-phosphate to glucosamine-1-phosphate. The protein is Phosphoglucosamine mutase of Burkholderia ambifaria (strain MC40-6).